Reading from the N-terminus, the 45-residue chain is Mu-conotoxin-like Cal 12.1.2c (45 aa).

Cystine bridges form between C3-C16, C11-C28, C18-C33, and C27-C39. Residue P23 is modified to 4-hydroxyproline. A 6'-bromotryptophan mark is found at W37 and W38. P40 bears the 4-hydroxyproline mark. A 6'-bromotryptophan modification is found at W44.

Expressed by the venom duct.

It is found in the secreted. Mu-conotoxins block voltage-gated sodium channels. This toxin reversibly blocks voltage-gated sodium channel in cephalopods, with no alteration in the voltage dependence of sodium conductance or on the kinetics of inactivation. This is Mu-conotoxin-like Cal 12.1.2c from Californiconus californicus (California cone).